Reading from the N-terminus, the 217-residue chain is 3,4-dihydroxy-2-butanone 4-phosphate synthase (217 aa).

Residues 37 to 38, aspartate 42, 150 to 154, and glutamate 174 contribute to the D-ribulose 5-phosphate site; these read RE and RRGHT. A Mg(2+)-binding site is contributed by glutamate 38. Histidine 153 lines the Mg(2+) pocket.

Belongs to the DHBP synthase family. In terms of assembly, homodimer. Mg(2+) serves as cofactor. The cofactor is Mn(2+).

The enzyme catalyses D-ribulose 5-phosphate = (2S)-2-hydroxy-3-oxobutyl phosphate + formate + H(+). It functions in the pathway cofactor biosynthesis; riboflavin biosynthesis; 2-hydroxy-3-oxobutyl phosphate from D-ribulose 5-phosphate: step 1/1. Catalyzes the conversion of D-ribulose 5-phosphate to formate and 3,4-dihydroxy-2-butanone 4-phosphate. This chain is 3,4-dihydroxy-2-butanone 4-phosphate synthase, found in Shewanella woodyi (strain ATCC 51908 / MS32).